The sequence spans 1422 residues: DNA-directed RNA polymerase subunit beta (1422 aa).

The disordered stretch occupies residues Gln-1392–Ala-1422.

It belongs to the RNA polymerase beta chain family. In terms of assembly, the RNAP catalytic core consists of 2 alpha, 1 beta, 1 beta' and 1 omega subunit. When a sigma factor is associated with the core the holoenzyme is formed, which can initiate transcription.

The enzyme catalyses RNA(n) + a ribonucleoside 5'-triphosphate = RNA(n+1) + diphosphate. Its function is as follows. DNA-dependent RNA polymerase catalyzes the transcription of DNA into RNA using the four ribonucleoside triphosphates as substrates. The polypeptide is DNA-directed RNA polymerase subunit beta (Anaeromyxobacter dehalogenans (strain 2CP-C)).